A 795-amino-acid chain; its full sequence is ATP-dependent RNA helicase DHX15 (795 aa).

Residues 1–108 are disordered; sequence MSKRHRLDLG…HSTHAGHAGH (108 aa). Position 15 is a phosphoserine (Ser15). The segment covering 20–62 has biased composition (basic and acidic residues); it reads AGTDGKDRDRDRDREDRSKDRDRERDRGDREREREKEKEKELR. The span at 79–108 shows a compositional bias: low complexity; that stretch reads ASHSAHSTHSAHSAHSTHSAHSTHAGHAGH. A Helicase ATP-binding domain is found at 147-313; sequence TDILVRHQSF…FDNCPLLTIP (167 aa). Position 160-167 (160-167) interacts with ATP; the sequence is GETGSGKT. The DEAH box motif lies at 260-263; it reads DEAH. The Helicase C-terminal domain maps to 338–518; that stretch reads TVIQIHMCEE…SVVLQLKKLG (181 aa). Lys488 is modified (N6-acetyllysine). Lys786 participates in a covalent cross-link: Glycyl lysine isopeptide (Lys-Gly) (interchain with G-Cter in SUMO2).

The protein belongs to the DEAD box helicase family. DEAH subfamily. DDX15/PRP43 sub-subfamily. Component of the U11/U12 snRNPs that are part of the U12-type spliceosome. Identified in the Intron Large spliceosome complex (IL, also named intron lariat spliceosome), a post-mRNA release spliceosomal complex containing the excised intron, U2, U5 and U6 snRNPs, and splicing factors; the association may be transient. The IL complex exists in two distinct conformations, one with the DHX15 (ILS2) and one without (ILS1). Interacts with TFIP11 (via G-patch domain); indicative for a recruitment to the IL complex. Interacts with SSB/La. Interacts with GPATCH2 (via G-patch domain); promoting the RNA helicase activity. Interacts with NKRF (via G-patch domain); promoting the RNA helicase activity. Interacts with NLRP6.

The protein localises to the nucleus. Its subcellular location is the nucleolus. It catalyses the reaction ATP + H2O = ADP + phosphate + H(+). With respect to regulation, ATPase activity is enhanced upon binding to G-patch domain-containing proteins. G-patch domain-containing proteins act like a brace that tethers mobile sections of DHX15 together, stabilizing a functional conformation with high RNA affinity, thereby promoting the ATPase activity. Its function is as follows. RNA helicase involved in mRNA processing and antiviral innate immunity. Pre-mRNA processing factor involved in disassembly of spliceosomes after the release of mature mRNA. In cooperation with TFIP11 seem to be involved in the transition of the U2, U5 and U6 snRNP-containing IL complex to the snRNP-free IS complex leading to efficient debranching and turnover of excised introns. Plays a key role in antiviral innate immunity by promoting both MAVS-dependent signaling and NLRP6 inflammasome. Acts as an RNA virus sensor: recognizes and binds viral double stranded RNA (dsRNA) and activates the MAVS-dependent signaling to produce interferon-beta and interferon lambda-3 (IFNL3). Involved in intestinal antiviral innate immunity together with NLRP6: recognizes and binds viral dsRNA and promotes activation of the NLRP6 inflammasome in intestinal epithelial cells to restrict infection by enteric viruses. The NLRP6 inflammasome acts by promoting maturation and secretion of IL18 in the extracellular milieu. Also involved in antibacterial innate immunity by promoting Wnt-induced antimicrobial protein expression in Paneth cells. The chain is ATP-dependent RNA helicase DHX15 from Pongo abelii (Sumatran orangutan).